The sequence spans 215 residues: Deoxyribose-phosphate aldolase (215 aa).

D90 serves as the catalytic Proton donor/acceptor. Catalysis depends on K152, which acts as the Schiff-base intermediate with acetaldehyde. The active-site Proton donor/acceptor is the K181.

This sequence belongs to the DeoC/FbaB aldolase family. DeoC type 1 subfamily.

It localises to the cytoplasm. It carries out the reaction 2-deoxy-D-ribose 5-phosphate = D-glyceraldehyde 3-phosphate + acetaldehyde. The protein operates within carbohydrate degradation; 2-deoxy-D-ribose 1-phosphate degradation; D-glyceraldehyde 3-phosphate and acetaldehyde from 2-deoxy-alpha-D-ribose 1-phosphate: step 2/2. Functionally, catalyzes a reversible aldol reaction between acetaldehyde and D-glyceraldehyde 3-phosphate to generate 2-deoxy-D-ribose 5-phosphate. This Ureaplasma parvum serovar 3 (strain ATCC 27815 / 27 / NCTC 11736) protein is Deoxyribose-phosphate aldolase.